The sequence spans 122 residues: Large ribosomal subunit protein uL14 (122 aa).

Belongs to the universal ribosomal protein uL14 family. Part of the 50S ribosomal subunit. Forms a cluster with proteins L3 and L19. In the 70S ribosome, L14 and L19 interact and together make contacts with the 16S rRNA in bridges B5 and B8.

In terms of biological role, binds to 23S rRNA. Forms part of two intersubunit bridges in the 70S ribosome. This chain is Large ribosomal subunit protein uL14, found in Allorhizobium ampelinum (strain ATCC BAA-846 / DSM 112012 / S4) (Agrobacterium vitis (strain S4)).